The chain runs to 499 residues: Bifunctional purine biosynthesis protein PurH (499 aa).

In terms of domain architecture, MGS-like spans 1–144 (MINRALISVY…KNFKDVIVVT (144 aa)).

The protein belongs to the PurH family.

The catalysed reaction is (6R)-10-formyltetrahydrofolate + 5-amino-1-(5-phospho-beta-D-ribosyl)imidazole-4-carboxamide = 5-formamido-1-(5-phospho-D-ribosyl)imidazole-4-carboxamide + (6S)-5,6,7,8-tetrahydrofolate. It carries out the reaction IMP + H2O = 5-formamido-1-(5-phospho-D-ribosyl)imidazole-4-carboxamide. It functions in the pathway purine metabolism; IMP biosynthesis via de novo pathway; 5-formamido-1-(5-phospho-D-ribosyl)imidazole-4-carboxamide from 5-amino-1-(5-phospho-D-ribosyl)imidazole-4-carboxamide (10-formyl THF route): step 1/1. Its pathway is purine metabolism; IMP biosynthesis via de novo pathway; IMP from 5-formamido-1-(5-phospho-D-ribosyl)imidazole-4-carboxamide: step 1/1. The polypeptide is Bifunctional purine biosynthesis protein PurH (Clostridium kluyveri (strain NBRC 12016)).